We begin with the raw amino-acid sequence, 458 residues long: Putative long chain fatty acid-CoA ligase VraA (458 aa).

This sequence belongs to the ATP-dependent AMP-binding enzyme family.

The polypeptide is Putative long chain fatty acid-CoA ligase VraA (vraA) (Staphylococcus aureus (strain MRSA252)).